A 316-amino-acid chain; its full sequence is HPr kinase/phosphorylase (316 aa).

Residues H143 and K164 contribute to the active site. 158–165 (GEAGSGKS) contacts ATP. S165 is a binding site for Mg(2+). The active-site Proton acceptor; for phosphorylation activity. Proton donor; for dephosphorylation activity is D182. The interval 206-215 (LEVRGLGVLN) is important for the catalytic mechanism of both phosphorylation and dephosphorylation. E207 serves as a coordination point for Mg(2+). Residue R251 is part of the active site. The important for the catalytic mechanism of dephosphorylation stretch occupies residues 272 to 277 (PVMPGR).

The protein belongs to the HPrK/P family. In terms of assembly, homohexamer. It depends on Mg(2+) as a cofactor.

It carries out the reaction [HPr protein]-L-serine + ATP = [HPr protein]-O-phospho-L-serine + ADP + H(+). It catalyses the reaction [HPr protein]-O-phospho-L-serine + phosphate + H(+) = [HPr protein]-L-serine + diphosphate. Its function is as follows. Catalyzes the ATP- as well as the pyrophosphate-dependent phosphorylation of a specific serine residue in HPr, a phosphocarrier protein of the phosphoenolpyruvate-dependent sugar phosphotransferase system (PTS). HprK/P also catalyzes the pyrophosphate-producing, inorganic phosphate-dependent dephosphorylation (phosphorolysis) of seryl-phosphorylated HPr (P-Ser-HPr). The polypeptide is HPr kinase/phosphorylase (Xanthomonas axonopodis pv. citri (strain 306)).